The primary structure comprises 516 residues: 2-isopropylmalate synthase (516 aa).

Residues 5–268 (LIIFDTTLRD…DLGIDTTQIV (264 aa)) enclose the Pyruvate carboxyltransferase domain. 4 residues coordinate Mn(2+): aspartate 14, histidine 202, histidine 204, and asparagine 239. Residues 395 to 516 (KFVSLSQHSE…DKLNPQRADI (122 aa)) are regulatory domain.

It belongs to the alpha-IPM synthase/homocitrate synthase family. LeuA type 1 subfamily. As to quaternary structure, homodimer. It depends on Mn(2+) as a cofactor.

The protein localises to the cytoplasm. It catalyses the reaction 3-methyl-2-oxobutanoate + acetyl-CoA + H2O = (2S)-2-isopropylmalate + CoA + H(+). Its pathway is amino-acid biosynthesis; L-leucine biosynthesis; L-leucine from 3-methyl-2-oxobutanoate: step 1/4. In terms of biological role, catalyzes the condensation of the acetyl group of acetyl-CoA with 3-methyl-2-oxobutanoate (2-ketoisovalerate) to form 3-carboxy-3-hydroxy-4-methylpentanoate (2-isopropylmalate). The polypeptide is 2-isopropylmalate synthase (Paraburkholderia phymatum (strain DSM 17167 / CIP 108236 / LMG 21445 / STM815) (Burkholderia phymatum)).